Consider the following 430-residue polypeptide: Glutamate-1-semialdehyde 2,1-aminomutase (430 aa).

K268 carries the N6-(pyridoxal phosphate)lysine modification.

Belongs to the class-III pyridoxal-phosphate-dependent aminotransferase family. HemL subfamily. In terms of assembly, homodimer. Pyridoxal 5'-phosphate serves as cofactor.

Its subcellular location is the cytoplasm. The catalysed reaction is (S)-4-amino-5-oxopentanoate = 5-aminolevulinate. The protein operates within porphyrin-containing compound metabolism; protoporphyrin-IX biosynthesis; 5-aminolevulinate from L-glutamyl-tRNA(Glu): step 2/2. This Bacillus subtilis (strain 168) protein is Glutamate-1-semialdehyde 2,1-aminomutase (hemL).